Reading from the N-terminus, the 278-residue chain is uncharacterized protein (278 aa).

The protein resides in the cytoplasm. The protein localises to the nucleus. Probable methyltransferase. This is an uncharacterized protein from Schizosaccharomyces pombe (strain 972 / ATCC 24843) (Fission yeast).